Reading from the N-terminus, the 435-residue chain is Ribulose bisphosphate carboxylase large chain (435 aa).

N6,N6,N6-trimethyllysine is present on Lys-5. Substrate contacts are provided by Asn-114 and Thr-164. The active-site Proton acceptor is the Lys-166. Lys-168 contributes to the substrate binding site. The Mg(2+) site is built by Lys-192, Asp-194, and Glu-195. Lys-192 is modified (N6-carboxylysine). Residue His-285 is the Proton acceptor of the active site. Positions 286, 318, and 370 each coordinate substrate.

The protein belongs to the RuBisCO large chain family. Type I subfamily. Heterohexadecamer of 8 large chains and 8 small chains; disulfide-linked. The disulfide link is formed within the large subunit homodimers. Mg(2+) serves as cofactor. In terms of processing, the disulfide bond which can form in the large chain dimeric partners within the hexadecamer appears to be associated with oxidative stress and protein turnover.

It is found in the plastid. The protein localises to the chloroplast. The catalysed reaction is 2 (2R)-3-phosphoglycerate + 2 H(+) = D-ribulose 1,5-bisphosphate + CO2 + H2O. It catalyses the reaction D-ribulose 1,5-bisphosphate + O2 = 2-phosphoglycolate + (2R)-3-phosphoglycerate + 2 H(+). In terms of biological role, ruBisCO catalyzes two reactions: the carboxylation of D-ribulose 1,5-bisphosphate, the primary event in carbon dioxide fixation, as well as the oxidative fragmentation of the pentose substrate in the photorespiration process. Both reactions occur simultaneously and in competition at the same active site. This Drosera burmannii (Burmese sundew) protein is Ribulose bisphosphate carboxylase large chain.